We begin with the raw amino-acid sequence, 44 residues long: Photosystem I reaction center subunit IX (44 aa).

A helical transmembrane segment spans residues 7-27; that stretch reads YLSTVPVLTTLWFGSLAGLLI.

Belongs to the PsaJ family.

The protein localises to the plastid. It is found in the chloroplast thylakoid membrane. Its function is as follows. May help in the organization of the PsaE and PsaF subunits. In Dioscorea elephantipes (Elephant's foot yam), this protein is Photosystem I reaction center subunit IX.